The following is a 184-amino-acid chain: Prolyl-tRNA synthetase associated domain-containing protein 1 (184 aa).

This sequence belongs to the PRORSD1 family.

This Danio rerio (Zebrafish) protein is Prolyl-tRNA synthetase associated domain-containing protein 1 (Prorsd1).